Reading from the N-terminus, the 228-residue chain is Putative N-acetylmannosamine-6-phosphate 2-epimerase (228 aa).

The protein belongs to the NanE family.

The catalysed reaction is an N-acyl-D-glucosamine 6-phosphate = an N-acyl-D-mannosamine 6-phosphate. Its pathway is amino-sugar metabolism; N-acetylneuraminate degradation; D-fructose 6-phosphate from N-acetylneuraminate: step 3/5. In terms of biological role, converts N-acetylmannosamine-6-phosphate (ManNAc-6-P) to N-acetylglucosamine-6-phosphate (GlcNAc-6-P). This Thermosynechococcus vestitus (strain NIES-2133 / IAM M-273 / BP-1) protein is Putative N-acetylmannosamine-6-phosphate 2-epimerase.